The following is a 311-amino-acid chain: Methionyl-tRNA formyltransferase (311 aa).

110–113 (SLLP) contacts (6S)-5,6,7,8-tetrahydrofolate.

This sequence belongs to the Fmt family.

It catalyses the reaction L-methionyl-tRNA(fMet) + (6R)-10-formyltetrahydrofolate = N-formyl-L-methionyl-tRNA(fMet) + (6S)-5,6,7,8-tetrahydrofolate + H(+). Its function is as follows. Attaches a formyl group to the free amino group of methionyl-tRNA(fMet). The formyl group appears to play a dual role in the initiator identity of N-formylmethionyl-tRNA by promoting its recognition by IF2 and preventing the misappropriation of this tRNA by the elongation apparatus. The chain is Methionyl-tRNA formyltransferase from Streptococcus pneumoniae serotype 2 (strain D39 / NCTC 7466).